Consider the following 91-residue polypeptide: Small ribosomal subunit protein uS19 (91 aa).

It belongs to the universal ribosomal protein uS19 family.

In terms of biological role, protein S19 forms a complex with S13 that binds strongly to the 16S ribosomal RNA. The polypeptide is Small ribosomal subunit protein uS19 (Sphingopyxis alaskensis (strain DSM 13593 / LMG 18877 / RB2256) (Sphingomonas alaskensis)).